The chain runs to 208 residues: MGGTFDPIHHGHLVAASEVAARFALDEVVFVPTGKPWQKSRVDIAPAEHRYLMTVIATASNPRFTVSRIDIDRGGFTYTIDTLRELRDLRPEADLFFITGADALAQILQWKDVAELWSLAHFVGVSRPGHALTDDGLPLDGVSLMEVPALSISSTDCRQRVAEGLPVWYLVPDGVVQHISKHRLYTAPEHGRLLDARGEALAVGESGD.

This sequence belongs to the NadD family.

It carries out the reaction nicotinate beta-D-ribonucleotide + ATP + H(+) = deamido-NAD(+) + diphosphate. The protein operates within cofactor biosynthesis; NAD(+) biosynthesis; deamido-NAD(+) from nicotinate D-ribonucleotide: step 1/1. In terms of biological role, catalyzes the reversible adenylation of nicotinate mononucleotide (NaMN) to nicotinic acid adenine dinucleotide (NaAD). The sequence is that of Probable nicotinate-nucleotide adenylyltransferase from Kineococcus radiotolerans (strain ATCC BAA-149 / DSM 14245 / SRS30216).